We begin with the raw amino-acid sequence, 99 residues long: Large ribosomal subunit protein bL25 (99 aa).

It belongs to the bacterial ribosomal protein bL25 family. Part of the 50S ribosomal subunit; part of the 5S rRNA/L5/L18/L25 subcomplex. Contacts the 5S rRNA. Binds to the 5S rRNA independently of L5 and L18.

In terms of biological role, this is one of the proteins that binds to the 5S RNA in the ribosome where it forms part of the central protuberance. This Nostoc sp. (strain PCC 7120 / SAG 25.82 / UTEX 2576) protein is Large ribosomal subunit protein bL25.